The chain runs to 450 residues: Ornithine decarboxylase (450 aa).

N6-(pyridoxal phosphate)lysine is present on Lys59. Pyridoxal 5'-phosphate-binding positions include Ser190, Gly227, and 264-267; that span reads EPGR. Residue Ser293 is modified to Phosphoserine; by CK2. Substrate is bound at residue 321–322; it reads YD. The active-site Proton donor; shared with dimeric partner is Cys350. Asp351 is a binding site for substrate. Tyr379 contributes to the pyridoxal 5'-phosphate binding site.

Belongs to the Orn/Lys/Arg decarboxylase class-II family. Homodimer. Only the dimer is catalytically active, as the active sites are constructed of residues from both monomers. Pyridoxal 5'-phosphate is required as a cofactor.

The enzyme catalyses L-ornithine + H(+) = putrescine + CO2. Its pathway is amine and polyamine biosynthesis; putrescine biosynthesis via L-ornithine pathway; putrescine from L-ornithine: step 1/1. With respect to regulation, inhibited by antizymes (AZs) in response to polyamine levels. AZs inhibit the assembly of the functional homodimer by binding to ODC monomers and targeting them for ubiquitin-independent proteolytic destruction by the 26S proteasome. In terms of biological role, catalyzes the first and rate-limiting step of polyamine biosynthesis that converts ornithine into putrescine, which is the precursor for the polyamines, spermidine and spermine. Polyamines are essential for cell proliferation and are implicated in cellular processes, ranging from DNA replication to apoptosis. The polypeptide is Ornithine decarboxylase (ODC1) (Gallus gallus (Chicken)).